Consider the following 518-residue polypeptide: MPTPRMSMRKLKEVLRLKWACGLTHRQISRAIGISVGAVSKFAAQASQAGLDWAAAEAMSDDELDARLRPAATNAAATTTRRIEPDYTALHRELRRKGVTLQLLWEEYAEANPGQRTYRYTQFCQKYKDWAKSIKRSMRQQHRAGEKLFADFAGPTVPVLASDGGVEFEAHVFVAVLGASNYTFACATRTETMADWIGSLCDALEFIGGVPELLVPDNPKALIARPDRYEPGLGTTTQDFVNHYGTAMLPARPRKPQDKAKVEVGVQIVERWVLARLRHYRFYSLAELNKAIAELIADLNQRPFKRLEGNRREWFERLDQPVLRPLPVRRYEIATFQKCRVNIDYHVDVGGHYYSVPHSLARQEVWARITRHGVEILHGGKRVAAHARSRLKGKHTTIAEHMPAAHRAHMEWTPGRLLNWGASVGPGAEAVVRHLLTNKPHPEMGYRACLGLLSLARKYGKHRLEAACQRALKIGSPTRRSVLSILEAGLDLQPSLPTTPAEWRSPEHENVRGPDYYH.

An HTH IS408-type domain is found at 11-94; it reads LKEVLRLKWA…PDYTALHREL (84 aa). A DNA-binding region (H-T-H motif) is located at residues 23 to 44; that stretch reads LTHRQISRAIGISVGAVSKFAA. The 196-residue stretch at 140–335 folds into the Integrase catalytic domain; that stretch reads QQHRAGEKLF…LPVRRYEIAT (196 aa). The disordered stretch occupies residues 496 to 518; the sequence is LPTTPAEWRSPEHENVRGPDYYH. Positions 504-518 are enriched in basic and acidic residues; that stretch reads RSPEHENVRGPDYYH.

This sequence belongs to the transposase IS21/IS408/IS1162 family.

Functionally, required for the transposition of the insertion element. The protein is Putative transposase for insertion sequence IS408 of Burkholderia multivorans (strain ATCC 17616 / 249).